We begin with the raw amino-acid sequence, 623 residues long: MPHSDELDSRDVLSVSGLNIAFHHEGQQVDAVRNVSLRLKRGETLTIVGESGSGKSVTALALMRLIEQSGANVRCGEMLLRRRNRQVIELSEQSDAQMRRVRGADIAMIFQEPMTSLNPVFTVGEQIAESIRLHQGASHEEALAEAKRMLDQVRIPESQAILSRYPHQLSGGMRQRVMIAMALSCRPAVLIADEPTTALDVTIQAQILQLIKVLQQEMSMGVIFITHDMGVVADIADRVLVMYQGEAVETGSVEQIFHAPTHPYTQTLLAAVPQLGAMRGHSLPRRFPLISADEPALYESQIEQDTVVEGEPILQVRGLVTRFPLRSGLFNRVTREVHAVENISFDLWPGETLSLVGESGSGKSTTGRALLRLVESRQGEIIFNGQRIDTLSAGKLQPLRRDIQCIFQDPYASLDPRQTVGYSIMEPLRIHGLGQGDAAAKRVAWLLERVGLRPEHAWRYPHEFSGGQRQRICIARALALNPKVIIADEAVSALDVSVRGQIINLLLDLQREMGIAYLFISHDMAVVERISHRVAVMYLGQIVEMGPRRAVFENPQHPYTRKLMAAVPVADPSRHRPRRVLLSDDIPSNIHKRGEETPAVSLQLVGPGHYVARPLQDNALSRL.

2 ABC transporter domains span residues 15–269 and 325–564; these read VSGL…QTLL and LRSG…RKLM. ATP contacts are provided by residues 49-56 and 357-364; these read GESGSGKS.

Belongs to the ABC transporter superfamily. Glutathione importer (TC 3.A.1.5.11) family. The complex is composed of two ATP-binding proteins (GsiA), two transmembrane proteins (GsiC and GsiD) and a solute-binding protein (GsiB).

The protein resides in the cell inner membrane. It carries out the reaction glutathione(out) + ATP + H2O = glutathione(in) + ADP + phosphate + H(+). Its function is as follows. Part of the ABC transporter complex GsiABCD involved in glutathione import. Responsible for energy coupling to the transport system. This chain is Glutathione import ATP-binding protein GsiA, found in Salmonella typhi.